The primary structure comprises 255 residues: Hydroxyacylglutathione hydrolase (255 aa).

Residues His56, His58, Asp60, His61, His114, Asp133, and His171 each contribute to the Zn(2+) site.

The protein belongs to the metallo-beta-lactamase superfamily. Glyoxalase II family. Monomer. Requires Zn(2+) as cofactor.

The enzyme catalyses an S-(2-hydroxyacyl)glutathione + H2O = a 2-hydroxy carboxylate + glutathione + H(+). Its pathway is secondary metabolite metabolism; methylglyoxal degradation; (R)-lactate from methylglyoxal: step 2/2. Its function is as follows. Thiolesterase that catalyzes the hydrolysis of S-D-lactoyl-glutathione to form glutathione and D-lactic acid. The chain is Hydroxyacylglutathione hydrolase from Chelativorans sp. (strain BNC1).